Here is a 158-residue protein sequence, read N- to C-terminus: Putative 8-oxo-dGTP diphosphatase YtkD (158 aa).

The Nudix hydrolase domain occupies 6-145 (DYYQNTVQLS…SFIMKDSVLP (140 aa)). The Nudix box signature appears at 53–74 (GKVEPMECAEEAALREVKEETG). The Mg(2+) site is built by glutamate 68 and glutamate 72.

The protein belongs to the Nudix hydrolase family. The cofactor is Mg(2+).

The catalysed reaction is 8-oxo-dGTP + H2O = 8-oxo-dGMP + diphosphate + H(+). With respect to regulation, not induced by oxidative damage (following treatment with paraquat or hydrogen peroxide). Not induced by mitomycin C. Not induced by sigma-B general stress inducers such as sodium chloride, ethanol or heat. In terms of biological role, involved in the GO system responsible for removing an oxidatively damaged form of guanine (7,8-dihydro-8-oxoguanine, 8-oxo-dGTP) from DNA and the nucleotide pool. 8-oxo-dGTP is inserted opposite dA and dC residues of template DNA with almost equal efficiency thus leading to A.T to G.C transversions. Functions, in conjunction with MutT, to protect vegetatively growing cells from DNA-damaging agents such as H(2)O(2) or t-BHP (t-butylhydroperoxide). The 2 proteins do not however protect spores. According to PubMed:15576788, phosphohydrolase that catalyzes the hydrolysis of all common nucleoside triphosphates as well as of the mutagenic analog 8-oxo-dGTP. The high catalytic efficiency on dGTP is in contrast to results from PubMed:14761999. According to PubMed:14761999, catalyzes the hydrolysis of 8-oxo-dGTP with a specific activity 413 times higher than that exhibited against dGTP. Preferentially catalyzes the hydrolysis of 8-oxo-dGTP and 8-oxo-GTP. According to PubMed:15576788, hydrolyzes nucleoside triphosphates in a stepwise fashion through the diphosphate to the monophosphate, releasing two molecules of inorganic orthophosphate. This Bacillus subtilis (strain 168) protein is Putative 8-oxo-dGTP diphosphatase YtkD (ytkD).